Here is a 190-residue protein sequence, read N- to C-terminus: Elongation factor P-like protein (190 aa).

Belongs to the elongation factor P family.

The chain is Elongation factor P-like protein from Marinomonas sp. (strain MWYL1).